Consider the following 132-residue polypeptide: Small ribosomal subunit protein uS8 (132 aa).

This sequence belongs to the universal ribosomal protein uS8 family. Part of the 30S ribosomal subunit. Contacts proteins S5 and S12.

One of the primary rRNA binding proteins, it binds directly to 16S rRNA central domain where it helps coordinate assembly of the platform of the 30S subunit. This is Small ribosomal subunit protein uS8 from Mycobacterium leprae (strain Br4923).